The primary structure comprises 378 residues: Metacaspase-1B (378 aa).

A disordered region spans residues 1 to 70; that stretch reads MCSPPPYPPQ…QEAQSFGGGA (70 aa). Over residues 10-29 the composition is skewed to low complexity; that stretch reads QGHHYPPSPHGSYYSPTPYG. Residues His169 and Cys225 contribute to the active site.

This sequence belongs to the peptidase C14B family.

Involved in cell death (apoptosis). In Aspergillus terreus (strain NIH 2624 / FGSC A1156), this protein is Metacaspase-1B (casB).